The chain runs to 153 residues: Small ribosomal subunit protein uS13 (153 aa).

Belongs to the universal ribosomal protein uS13 family. Part of the 30S ribosomal subunit. Forms a loose heterodimer with protein S19. Forms two bridges to the 50S subunit in the 70S ribosome.

Its function is as follows. Located at the top of the head of the 30S subunit, it contacts several helices of the 16S rRNA. In the 70S ribosome it contacts the 23S rRNA (bridge B1a) and protein L5 of the 50S subunit (bridge B1b), connecting the 2 subunits; these bridges are implicated in subunit movement. In Pyrobaculum islandicum (strain DSM 4184 / JCM 9189 / GEO3), this protein is Small ribosomal subunit protein uS13.